Here is a 447-residue protein sequence, read N- to C-terminus: Rab GDP dissociation inhibitor alpha (447 aa).

S427 carries the post-translational modification Phosphoserine.

It belongs to the Rab GDI family. Interacts with RHOH. Interacts with the non-phosphorylated forms of RAB1A, RAB3A, RAB5A, RAB5B, RAB5C, RAB8A, RAB8B, RAB10, RAB12, RAB35, and RAB43. As to expression, high expression in brain, lower in other tissues.

Its subcellular location is the cytoplasm. It localises to the golgi apparatus. The protein resides in the trans-Golgi network. Functionally, regulates the GDP/GTP exchange reaction of most Rab proteins by inhibiting the dissociation of GDP from them, and the subsequent binding of GTP to them. Promotes the dissociation of GDP-bound Rab proteins from the membrane and inhibits their activation. Promotes the dissociation of RAB1A, RAB3A, RAB5A and RAB10 from membranes. This is Rab GDP dissociation inhibitor alpha (Gdi1) from Rattus norvegicus (Rat).